A 55-amino-acid chain; its full sequence is Sec-independent protein translocase protein TatA (55 aa).

The chain crosses the membrane as a helical span at residues 1–21; sequence MFGELGVPEVLFILGIALLIF.

The protein belongs to the TatA/E family. Forms a complex with TatC.

It localises to the cell inner membrane. Part of the twin-arginine translocation (Tat) system that transports large folded proteins containing a characteristic twin-arginine motif in their signal peptide across membranes. TatA could form the protein-conducting channel of the Tat system. In Koribacter versatilis (strain Ellin345), this protein is Sec-independent protein translocase protein TatA.